The following is a 40-amino-acid chain: Small polypeptide DEVIL 3 (40 aa).

The tract at residues 9–40 is required for DVL/RTFL small polypeptide activity; it reads PCNKKLGGYLKEQKGRLYIIRRCVVMLICWHD. The helical transmembrane segment at 12 to 28 threads the bilayer; it reads KKLGGYLKEQKGRLYII.

Belongs to the DVL/RTFL small polypeptides family. As to expression, mostly expressed in flowers and stems, and, to a lower extent, in roots and leaves.

The protein resides in the cell membrane. Small polypeptide acting as a regulatory molecule which coordinates cellular responses required for differentiation, growth and development, including leaves shape, pedicule elongation, inflorescence organization and fruit maturation, probably by restricting polar cell proliferation in lateral organs and coordinating socket cell recruitment and differentiation at trichome sites. The chain is Small polypeptide DEVIL 3 from Arabidopsis thaliana (Mouse-ear cress).